The following is a 92-amino-acid chain: UPF0125 protein NMA1005 (92 aa).

This sequence belongs to the UPF0125 (RnfH) family.

This Neisseria meningitidis serogroup A / serotype 4A (strain DSM 15465 / Z2491) protein is UPF0125 protein NMA1005.